A 113-amino-acid polypeptide reads, in one-letter code: uncharacterized protein (113 aa).

A disordered region spans residues C28 to E55.

This is an uncharacterized protein from Human cytomegalovirus (strain AD169) (HHV-5).